Consider the following 407-residue polypeptide: Lysosome-associated membrane glycoprotein 1 (407 aa).

Positions 1-21 are cleaved as a signal peptide; sequence MAAPGAPRSLLLLLLAGLAHG. Residues 22-189 are first lumenal domain; it reads ASALFVVKDS…SKEETRCTQD (168 aa). The Lumenal portion of the chain corresponds to 22 to 371; it reads ASALFVVKDS…VEECMQDGNN (350 aa). 12 N-linked (GlcNAc...) asparagine glycosylation sites follow: Asn-32, Asn-40, Asn-57, Asn-72, Asn-79, Asn-98, Asn-102, Asn-116, Asn-125, Asn-145, Asn-160, and Asn-178. Cys-36 and Cys-75 form a disulfide bridge. A disulfide bridge connects residues Cys-150 and Cys-186. Positions 183–206 are disordered; the sequence is ETRCTQDGPSPTTVPPSPSPPLVP. The hinge stretch occupies residues 190 to 219; it reads GPSPTTVPPSPSPPLVPTNPTVIKYNVTGE. The span at 194-206 shows a compositional bias: pro residues; sequence TTVPPSPSPPLVP. Asn-215, Asn-220, Asn-233, Asn-241, Asn-253, Asn-283, Asn-297, Asn-304, and Asn-312 each carry an N-linked (GlcNAc...) asparagine glycan. The interval 220–371 is second lumenal domain; the sequence is NGTCLLASMA…VEECMQDGNN (152 aa). An intrachain disulfide couples Cys-223 to Cys-260. Cys-328 and Cys-365 are joined by a disulfide. The chain crosses the membrane as a helical span at residues 372–395; the sequence is MLIPIAVGGALAGLVLIVLIAYLI. The Cytoplasmic portion of the chain corresponds to 396–407; that stretch reads GRKRSHAGYQTI.

Belongs to the LAMP family. As to quaternary structure, interacts with ABCB9; this interaction strongly stabilizes ABCB9 and protects ABCB9 against lysosomal degradation. Interacts with FURIN. Interacts with TMEM175; inhibiting the proton channel activity of TMEM175. Post-translationally, O- and N-glycosylated; some of the N-glycans attached to LAMP-1 are polylactosaminoglycans.

It localises to the lysosome membrane. Its subcellular location is the endosome membrane. The protein localises to the late endosome membrane. The protein resides in the cell membrane. It is found in the cytolytic granule membrane. Lysosomal membrane glycoprotein which plays an important role in lysosome biogenesis, lysosomal pH regulation, autophagy and cholesterol homeostasis. Acts as an important regulator of lysosomal lumen pH regulation by acting as a direct inhibitor of the proton channel TMEM175, facilitating lysosomal acidification for optimal hydrolase activity. Also plays an important role in NK-cells cytotoxicity. Mechanistically, participates in cytotoxic granule movement to the cell surface and perforin trafficking to the lytic granule. In addition, protects NK-cells from degranulation-associated damage induced by their own cytotoxic granule content. Presents carbohydrate ligands to selectins. This is Lysosome-associated membrane glycoprotein 1 (LAMP1) from Cricetulus griseus (Chinese hamster).